The sequence spans 273 residues: Putative pyruvate, phosphate dikinase regulatory protein (273 aa).

153-160 (GISRTSKT) is an ADP binding site.

Belongs to the pyruvate, phosphate/water dikinase regulatory protein family. PDRP subfamily.

It catalyses the reaction N(tele)-phospho-L-histidyl/L-threonyl-[pyruvate, phosphate dikinase] + ADP = N(tele)-phospho-L-histidyl/O-phospho-L-threonyl-[pyruvate, phosphate dikinase] + AMP + H(+). It carries out the reaction N(tele)-phospho-L-histidyl/O-phospho-L-threonyl-[pyruvate, phosphate dikinase] + phosphate + H(+) = N(tele)-phospho-L-histidyl/L-threonyl-[pyruvate, phosphate dikinase] + diphosphate. Bifunctional serine/threonine kinase and phosphorylase involved in the regulation of the pyruvate, phosphate dikinase (PPDK) by catalyzing its phosphorylation/dephosphorylation. In Rhizobium leguminosarum bv. trifolii (strain WSM2304), this protein is Putative pyruvate, phosphate dikinase regulatory protein.